Consider the following 1059-residue polypeptide: Carbamoyl phosphate synthase large chain (1059 aa).

A carboxyphosphate synthetic domain region spans residues 1–401 (MPKRKDIQKI…SLLKACRSLE (401 aa)). The ATP site is built by arginine 129, arginine 169, glycine 175, glycine 176, arginine 208, isoleucine 210, glutamate 215, glycine 241, isoleucine 242, histidine 243, glutamine 284, and glutamate 298. The ATP-grasp 1 domain occupies 133-327 (KQLMEELGQP…IAKLAAKIAV (195 aa)). 3 residues coordinate Mg(2+): glutamine 284, glutamate 298, and asparagine 300. Positions 284, 298, and 300 each coordinate Mn(2+). An oligomerization domain region spans residues 402 to 546 (VCVDHNELPA…YSTYGFENES (145 aa)). Residues 547–929 (VKSSKESVLV…ALYKAFEASY (383 aa)) form a carbamoyl phosphate synthetic domain region. In terms of domain architecture, ATP-grasp 2 spans 671-861 (EQALKELDIP…MAQVATRLIL (191 aa)). 10 residues coordinate ATP: arginine 707, serine 746, isoleucine 748, glutamate 752, glycine 777, valine 778, histidine 779, serine 780, glutamine 820, and glutamate 832. Mg(2+)-binding residues include glutamine 820, glutamate 832, and asparagine 834. Mn(2+) contacts are provided by glutamine 820, glutamate 832, and asparagine 834. An MGS-like domain is found at 930-1059 (LHLPNFGNIV…ESRSFTTEAI (130 aa)). An allosteric domain region spans residues 930 to 1059 (LHLPNFGNIV…ESRSFTTEAI (130 aa)).

It belongs to the CarB family. Composed of two chains; the small (or glutamine) chain promotes the hydrolysis of glutamine to ammonia, which is used by the large (or ammonia) chain to synthesize carbamoyl phosphate. Tetramer of heterodimers (alpha,beta)4. Mg(2+) is required as a cofactor. The cofactor is Mn(2+).

It catalyses the reaction hydrogencarbonate + L-glutamine + 2 ATP + H2O = carbamoyl phosphate + L-glutamate + 2 ADP + phosphate + 2 H(+). The catalysed reaction is hydrogencarbonate + NH4(+) + 2 ATP = carbamoyl phosphate + 2 ADP + phosphate + 2 H(+). Its pathway is amino-acid biosynthesis; L-arginine biosynthesis; carbamoyl phosphate from bicarbonate: step 1/1. It functions in the pathway pyrimidine metabolism; UMP biosynthesis via de novo pathway; (S)-dihydroorotate from bicarbonate: step 1/3. Its function is as follows. Large subunit of the glutamine-dependent carbamoyl phosphate synthetase (CPSase). CPSase catalyzes the formation of carbamoyl phosphate from the ammonia moiety of glutamine, carbonate, and phosphate donated by ATP, constituting the first step of 2 biosynthetic pathways, one leading to arginine and/or urea and the other to pyrimidine nucleotides. The large subunit (synthetase) binds the substrates ammonia (free or transferred from glutamine from the small subunit), hydrogencarbonate and ATP and carries out an ATP-coupled ligase reaction, activating hydrogencarbonate by forming carboxy phosphate which reacts with ammonia to form carbamoyl phosphate. This is Carbamoyl phosphate synthase large chain from Streptococcus sanguinis (strain SK36).